The following is a 446-amino-acid chain: Glutamine synthetase (446 aa).

The region spanning glutamate 18–glycine 103 is the GS beta-grasp domain. Residues proline 110 to tyrosine 446 enclose the GS catalytic domain. Positions 134 and 136 each coordinate Mg(2+). Glutamate 186 is an ATP binding site. Residues glutamate 191 and glutamate 198 each contribute to the Mg(2+) site. L-glutamate-binding positions include asparagine 242–glycine 243 and glycine 243. Mg(2+) is bound at residue histidine 247. Serine 251 provides a ligand contact to ATP. Arginine 300, glutamate 306, and arginine 318 together coordinate L-glutamate. The ATP site is built by arginine 318 and arginine 323. Glutamate 335 contacts Mg(2+). Position 337 (arginine 337) interacts with L-glutamate.

The protein belongs to the glutamine synthetase family. As to quaternary structure, oligomer of 12 subunits arranged in the form of two hexagons. In its feedback-inhibited form, interacts with TnrA in order to block its DNA-binding activity. It depends on Mg(2+) as a cofactor.

The protein localises to the cytoplasm. It carries out the reaction L-glutamate + NH4(+) + ATP = L-glutamine + ADP + phosphate + H(+). Its activity is regulated as follows. Inhibited by glutamine. In terms of biological role, glutamine synthetase (GS) is an unusual multitasking protein that functions as an enzyme, a transcription coregulator, and a chaperone in ammonium assimilation and in the regulation of genes involved in nitrogen metabolism. It catalyzes the ATP-dependent biosynthesis of glutamine from glutamate and ammonia. Feedback-inhibited GlnA also interacts with and regulates the activity of the transcriptional regulator TnrA. During nitrogen limitation, TnrA is in its DNA-binding active state and turns on the transcription of genes required for nitrogen assimilation. Under conditions of nitrogen excess, feedback-inhibited GlnA forms a stable complex with TnrA, which inhibits its DNA-binding activity. In contrast, feedback-inhibited GlnA acts as a chaperone to stabilize the DNA-binding activity of GlnR, which represses the transcription of nitrogen assimilation genes. The protein is Glutamine synthetase of Staphylococcus aureus (strain MSSA476).